Consider the following 170-residue polypeptide: Ribosomal RNA small subunit methyltransferase G (170 aa).

S-adenosyl-L-methionine-binding positions include Gly70, Leu75, 120–121 (AE), and Arg138.

Belongs to the methyltransferase superfamily. RNA methyltransferase RsmG family.

Its subcellular location is the cytoplasm. Functionally, specifically methylates the N7 position of guanine in position 518 of 16S rRNA. This Mycobacterium ulcerans (strain Agy99) protein is Ribosomal RNA small subunit methyltransferase G.